The sequence spans 173 residues: Peptide methionine sulfoxide reductase MsrA (173 aa).

The active site involves Cys-10.

The protein belongs to the MsrA Met sulfoxide reductase family.

The catalysed reaction is L-methionyl-[protein] + [thioredoxin]-disulfide + H2O = L-methionyl-(S)-S-oxide-[protein] + [thioredoxin]-dithiol. The enzyme catalyses [thioredoxin]-disulfide + L-methionine + H2O = L-methionine (S)-S-oxide + [thioredoxin]-dithiol. Has an important function as a repair enzyme for proteins that have been inactivated by oxidation. Catalyzes the reversible oxidation-reduction of methionine sulfoxide in proteins to methionine. The polypeptide is Peptide methionine sulfoxide reductase MsrA (Psychrobacter arcticus (strain DSM 17307 / VKM B-2377 / 273-4)).